We begin with the raw amino-acid sequence, 119 residues long: Large ribosomal subunit protein uL18 (119 aa).

The disordered stretch occupies residues 1 to 26; sequence MGQNDKAARRQKIKLRSKTRGQGTAA. A compositionally biased stretch (basic residues) spans 9-19; that stretch reads RRQKIKLRSKT.

This sequence belongs to the universal ribosomal protein uL18 family. Part of the 50S ribosomal subunit; part of the 5S rRNA/L5/L18/L25 subcomplex. Contacts the 5S and 23S rRNAs.

This is one of the proteins that bind and probably mediate the attachment of the 5S RNA into the large ribosomal subunit, where it forms part of the central protuberance. The sequence is that of Large ribosomal subunit protein uL18 from Prosthecochloris aestuarii (strain DSM 271 / SK 413).